Consider the following 234-residue polypeptide: NLP effector protein Pc576423 (234 aa).

Positions 1–18 are cleaved as a signal peptide; the sequence is MNLRAIAVTFATFAGANA. N-linked (GlcNAc...) asparagine glycosylation is found at Asn35 and Asn66. Residues 119-125 carry the Hepta-peptide GHRHDWE motif motif; the sequence is GHRHDWE.

It belongs to the Necrosis inducing protein (NPP1) family.

It localises to the secreted. Functionally, secreted effector that contributes strongly to virulence during infection by P.capsici. This chain is NLP effector protein Pc576423, found in Phytophthora capsici.